The chain runs to 188 residues: Transcription factor FapR (188 aa).

Belongs to the FapR family.

Transcriptional factor involved in regulation of membrane lipid biosynthesis by repressing genes involved in fatty acid and phospholipid metabolism. This Bacillus licheniformis (strain ATCC 14580 / DSM 13 / JCM 2505 / CCUG 7422 / NBRC 12200 / NCIMB 9375 / NCTC 10341 / NRRL NRS-1264 / Gibson 46) protein is Transcription factor FapR.